A 108-amino-acid chain; its full sequence is MDSSLSQKFTLAYASLLGVGGLMGYLKRGSKISLVAGGGSAALFYYVYTELPGNPVLASSIGIVGSAALTGMMGSRYLRTRKVVPAGLVSVVSLVMTGAYLHGLIRSS.

The next 3 membrane-spanning stretches (helical) occupy residues 32-52 (ISLV…TELP), 55-75 (PVLA…MMGS), and 85-105 (PAGL…HGLI).

The protein belongs to the TMEM14 family.

The protein resides in the membrane. Functionally, may be involved in free fatty acids export. The polypeptide is Protein FATTY ACID EXPORT 7 (Arabidopsis thaliana (Mouse-ear cress)).